The primary structure comprises 947 residues: MNNKKTATNRKGMIPNRLNKFSIRKYSVGTASILVGTTLIFGLSGHEAKAAEHTNGELNQSKNETTAPSENKTTKKVDSRQLKDNTQTATADQPKVTMSDSATVKETSSNMQSPQNATANQSTTKTSNVTTNDKSSTTYSNETDKSNLTQAKDVSTTPKTTTIKPRTLNRMAVNTVAAPQQGTNVNDKVHFSNIDIAIDKGHVNQTTGKTEFWATSSDVLKLKANYTIDDSVKEGDTFTFKYGQYFRPGSVRLPSQTQNLYNAQGNIIAKGIYDSTTNTTTYTFTNYVDQYTNVRGSFEQVAFAKRKNATTDKTAYKMEVTLGNDTYSEEIIVDYGNKKAQPLISSTNYINNEDLSRNMTAYVNQPKNTYTKQTFVTNLTGYKFNPNAKNFKIYEVTDQNQFVDSFTPDTSKLKDVTDQFDVIYSNDNKTATVDLMKGQTSSNKQYIIQQVAYPDNSSTDNGKIDYTLDTDKTKYSWSNSYSNVNGSSTANGDQKKYNLGDYVWEDTNKDGKQDANEKGIKGVYVILKDSNGKELDRTTTDENGKYQFTGLSNGTYSVEFSTPAGYTPTTANVGTDDAVDSDGLTTTGVIKDADNMTLDSGFYKTPKYSLGDYVWYDSNKDGKQDSTEKGIKGVKVTLQNEKGEVIGTTETDENGKYRFDNLDSGKYKVIFEKPAGLTQTGTNTTEDDKDADGGEVDVTITDHDDFTLDNGYYEEETSDSDSDSDSDSDSDSDSDSDSDSDSDSDSDSDSDSDSDSDSDSDSDSDSDSDSDSDSDSDSDSDSDSDSDSDSDSDSDSDSDSDSDSDSDSDSDSDSDSDSDSDSDSDSDSDSDSDSDSDSDSDSDSDSDSDSDSDSDSDSDSDSDSDSDSDSDSDSDNDSDSDSDSDSDAGKHTPAKPMSTVKDQHKTAKALPETGSENNNSNNGTLFGGLFAALGSLLLFGRRKKQNK.

The N-terminal stretch at 1 to 50 (MNNKKTATNRKGMIPNRLNKFSIRKYSVGTASILVGTTLIFGLSGHEAKA) is a signal peptide. The disordered stretch occupies residues 51-164 (AEHTNGELNQ…STTPKTTTIK (114 aa)). The segment at 51–495 (AEHTNGELNQ…GSSTANGDQK (445 aa)) is ligand binding A region. A compositionally biased stretch (polar residues) spans 56–71 (GELNQSKNETTAPSEN). Residues 72–83 (KTTKKVDSRQLK) are compositionally biased toward basic and acidic residues. Over residues 84–155 (DNTQTATADQ…SNLTQAKDVS (72 aa)) the composition is skewed to polar residues. 2 CNA-B domains span residues 496–606 (KYNL…YKTP) and 607–717 (KYSL…EEET). Residues 678–927 (TQTGTNTTED…NNSNNGTLFG (250 aa)) are disordered. 2 stretches are compositionally biased toward acidic residues: residues 685–695 (TEDDKDADGGE) and 712–886 (YYEE…DSDS). The LPXTG sorting signal motif lies at 910 to 914 (LPETG). The span at 912–927 (ETGSENNNSNNGTLFG) shows a compositional bias: low complexity. Thr913 carries the post-translational modification Pentaglycyl murein peptidoglycan amidated threonine. Residues 914–947 (GSENNNSNNGTLFGGLFAALGSLLLFGRRKKQNK) constitute a propeptide, removed by sortase.

This sequence belongs to the serine-aspartate repeat-containing protein (SDr) family. Homodimerizes; via N2-Domain. Interacts with host NRXN1; this interaction mediates bacterial attachment to host cells.

The protein resides in the secreted. It is found in the cell wall. In terms of biological role, cell surface-associated calcium-binding protein which plays an important role in adhesion and pathogenesis. Mediates interactions with components of the extracellular matrix such as host NRXN1 to promote bacterial adhesion. This chain is Serine-aspartate repeat-containing protein C (sdrC), found in Staphylococcus aureus (strain COL).